The chain runs to 273 residues: Undecaprenyl-diphosphatase (273 aa).

The next 7 helical transmembrane spans lie at 4 to 24 (LILL…FLPI), 43 to 63 (KAKV…CWEY), 82 to 102 (FVIN…LFIK), 108 to 128 (LFHP…ILWA), 183 to 203 (AAEF…FYDV), 217 to 237 (MFAT…RGFI), and 248 to 268 (FAWY…SGLV).

It belongs to the UppP family.

Its subcellular location is the cell inner membrane. It carries out the reaction di-trans,octa-cis-undecaprenyl diphosphate + H2O = di-trans,octa-cis-undecaprenyl phosphate + phosphate + H(+). Its function is as follows. Catalyzes the dephosphorylation of undecaprenyl diphosphate (UPP). Confers resistance to bacitracin. The polypeptide is Undecaprenyl-diphosphatase (Nitrosomonas europaea (strain ATCC 19718 / CIP 103999 / KCTC 2705 / NBRC 14298)).